The following is a 988-amino-acid chain: MTEAKSYKDTVNLPQTRFDMRANANKREPEIQQYWQEKGIYADLADNNPKDLFVLHDGPPYANGALHMGHALNKVLKDIINKYKLLQGHKVHYVPGWDCHGLPIELKVLQSLKSSERAELTPLTLRHKARDFALKAQQEQAVGFQRYGIWGDWKKPYLTLTPEYEAAQIGVFGAMALKGYIYRGLKPVHWSPSSRTALAEAELEYPEGHTSRSIYVSFPITQAGEKAAEILAPYIDDLAVAIWTTTPWTLPGNLAVALNPELTYAVVETESHIFHRSYLIVALDLVEKLSETFGVKLTVKVTLQGESLENTCYQHPLFDRVSPIVIGGDYVTTESGTGLVHTAPGHGQEDYVVGQRYGLPILSPVDAAGNLTEEAGKFAGLNVLNDANEAIINALQDQKVLLKEEAYEHKYPYDWRTKKPTIFRATEQWFASVEGFRDQALKAIKEVTWIPTQGENRITPMVGDRSDWCISRQRAWGVPIPVFYDEETSEPLLTEETINHVQQIIAEKGSDAWWELTVEELLPEAYRNNGRTYRKGEDTMDVWFDSGSSWAAVANAKNRPLKYPVDMYLEGSDQHRGWFQSSLLTSVAVNGIAPYKTVLTHGFVLDEKGHKMSKSLGNVVDPYQIINGGKNQKQEPAYGADVLRLWVASVDYANDVPIGQGILKQLVDIRNKIRNTARFLLGNLHDFNPETDAVAYEDLPELDRYMLHRMTEVFTEVTEAYESFQFFKFFQTVQNFCVVDLSNFYLDIAKDRLYISAPNAPRRRSCQTILQLALENLTKAIAPVLCHLAEDIWQFLPYEKPTESVFQSGWVNLDAQWQQPQLAQKWVSLRQLRDGINQLLEQARRDKVIGSSLEAKLIIVDPRTAESGTDEKQGENFVHWFYGWLENFNEPTFDPNDRKISLRNIFLTSQVEFIKSAEIEPSFTYEETVVINLERHDNNIRTKPIKIIVTKADGHKCERCWNYSTQVGSFSDDPTICERCNEALQGNF.

Positions 60–70 match the 'HIGH' region motif; sequence PYANGALHMGH. Glutamate 570 serves as a coordination point for L-isoleucyl-5'-AMP. The short motif at 611-615 is the 'KMSKS' region element; it reads KMSKS. Lysine 614 serves as a coordination point for ATP. Residues cysteine 957, cysteine 960, cysteine 977, and cysteine 980 each coordinate Zn(2+).

This sequence belongs to the class-I aminoacyl-tRNA synthetase family. IleS type 1 subfamily. As to quaternary structure, monomer. The cofactor is Zn(2+).

Its subcellular location is the cytoplasm. The enzyme catalyses tRNA(Ile) + L-isoleucine + ATP = L-isoleucyl-tRNA(Ile) + AMP + diphosphate. In terms of biological role, catalyzes the attachment of isoleucine to tRNA(Ile). As IleRS can inadvertently accommodate and process structurally similar amino acids such as valine, to avoid such errors it has two additional distinct tRNA(Ile)-dependent editing activities. One activity is designated as 'pretransfer' editing and involves the hydrolysis of activated Val-AMP. The other activity is designated 'posttransfer' editing and involves deacylation of mischarged Val-tRNA(Ile). This is Isoleucine--tRNA ligase from Synechocystis sp. (strain ATCC 27184 / PCC 6803 / Kazusa).